Consider the following 57-residue polypeptide: Protein translocase subunit SecE (57 aa).

The helical transmembrane segment at 34-54 threads the bilayer; the sequence is AGILLIGAIGFLVFLIMGGIV.

It belongs to the SecE/SEC61-gamma family. As to quaternary structure, component of the Sec protein translocase complex. Heterotrimer consisting of SecY (alpha), SecG (beta) and SecE (gamma) subunits. The heterotrimers can form oligomers, although 1 heterotrimer is thought to be able to translocate proteins. Interacts with the ribosome. May interact with SecDF, and other proteins may be involved.

It is found in the cell membrane. In terms of biological role, essential subunit of the Sec protein translocation channel SecYEG. Clamps together the 2 halves of SecY. May contact the channel plug during translocation. In Halobacterium salinarum (strain ATCC 29341 / DSM 671 / R1), this protein is Protein translocase subunit SecE.